The following is a 482-amino-acid chain: tRNA sulfurtransferase (482 aa).

One can recognise a THUMP domain in the interval 61–165; that stretch reads LAIRDALTRI…DDRLLLIKGR (105 aa). Residues 183 to 184, lysine 265, glycine 287, and glutamine 296 contribute to the ATP site; that span reads LI. Cysteines 344 and 456 form a disulfide. Positions 404-482 constitute a Rhodanese domain; that stretch reads FGPNDVILDI…GFNNVKVYRP (79 aa). Catalysis depends on cysteine 456, which acts as the Cysteine persulfide intermediate.

The protein belongs to the ThiI family.

Its subcellular location is the cytoplasm. The catalysed reaction is [ThiI sulfur-carrier protein]-S-sulfanyl-L-cysteine + a uridine in tRNA + 2 reduced [2Fe-2S]-[ferredoxin] + ATP + H(+) = [ThiI sulfur-carrier protein]-L-cysteine + a 4-thiouridine in tRNA + 2 oxidized [2Fe-2S]-[ferredoxin] + AMP + diphosphate. The enzyme catalyses [ThiS sulfur-carrier protein]-C-terminal Gly-Gly-AMP + S-sulfanyl-L-cysteinyl-[cysteine desulfurase] + AH2 = [ThiS sulfur-carrier protein]-C-terminal-Gly-aminoethanethioate + L-cysteinyl-[cysteine desulfurase] + A + AMP + 2 H(+). The protein operates within cofactor biosynthesis; thiamine diphosphate biosynthesis. Catalyzes the ATP-dependent transfer of a sulfur to tRNA to produce 4-thiouridine in position 8 of tRNAs, which functions as a near-UV photosensor. Also catalyzes the transfer of sulfur to the sulfur carrier protein ThiS, forming ThiS-thiocarboxylate. This is a step in the synthesis of thiazole, in the thiamine biosynthesis pathway. The sulfur is donated as persulfide by IscS. The protein is tRNA sulfurtransferase of Escherichia coli O139:H28 (strain E24377A / ETEC).